Reading from the N-terminus, the 397-residue chain is Ribosomal RNA large subunit methyltransferase I (397 aa).

Residues 2-80 (SAAIYLVKGR…QDVNRAFFVK (79 aa)) form the PUA domain.

It belongs to the methyltransferase superfamily. RlmI family.

It is found in the cytoplasm. The enzyme catalyses cytidine(1962) in 23S rRNA + S-adenosyl-L-methionine = 5-methylcytidine(1962) in 23S rRNA + S-adenosyl-L-homocysteine + H(+). Specifically methylates the cytosine at position 1962 (m5C1962) of 23S rRNA. The sequence is that of Ribosomal RNA large subunit methyltransferase I from Vibrio vulnificus (strain YJ016).